Reading from the N-terminus, the 539-residue chain is 4-coumarate--CoA ligase 5 (539 aa).

Positions 185, 186, 187, 188, 189, and 193 each coordinate ATP. (E)-4-coumaroyl-AMP contacts are provided by Tyr-235 and Ser-239. Arg-256 serves as a coordination point for CoA. The SBD1 stretch occupies residues 258 to 327 (DTVKMLQLVE…AKLPNAVLGQ (70 aa)). The (E)-4-coumaroyl-AMP site is built by Ala-305, Gln-327, Gly-328, Thr-332, and Met-340. The ATP site is built by Gln-327, Gly-328, and Thr-332. An SBD2 region spans residues 328–395 (GYGMTEAGPV…IRGKQIMKGY (68 aa)). 2 residues coordinate ATP: Asp-416 and Arg-431. Residues Lys-433 and Lys-437 each contribute to the (E)-4-coumaroyl-AMP site. CoA is bound by residues Lys-439 and Gly-440. Lys-522 contributes to the ATP binding site.

The protein belongs to the ATP-dependent AMP-binding enzyme family. It depends on Mg(2+) as a cofactor. Expressed in roots, stems, leaf blades, leaf sheaths and spikelets.

The catalysed reaction is (E)-ferulate + ATP + CoA = (E)-feruloyl-CoA + AMP + diphosphate. The enzyme catalyses (E)-4-coumarate + ATP + CoA = (E)-4-coumaroyl-CoA + AMP + diphosphate. It catalyses the reaction (E)-sinapate + ATP + CoA = (E)-sinapoyl-CoA + AMP + diphosphate. It carries out the reaction (E)-caffeate + ATP + CoA = (E)-caffeoyl-CoA + AMP + diphosphate. The catalysed reaction is (E)-cinnamate + ATP + CoA = (E)-cinnamoyl-CoA + AMP + diphosphate. The enzyme catalyses (E)-ferulate + ATP + H(+) = (E)-feruloyl-AMP + diphosphate. It catalyses the reaction (E)-feruloyl-AMP + CoA = (E)-feruloyl-CoA + AMP + H(+). It carries out the reaction (E)-4-coumarate + ATP + H(+) = (E)-4-coumaroyl-AMP + diphosphate. The catalysed reaction is (E)-4-coumaroyl-AMP + CoA = (E)-4-coumaroyl-CoA + AMP + H(+). The enzyme catalyses (E)-sinapate + ATP + H(+) = (E)-sinapoyl-AMP + diphosphate. It catalyses the reaction (E)-sinapoyl-AMP + CoA = (E)-sinapoyl-CoA + AMP + H(+). It carries out the reaction (E)-caffeate + ATP + H(+) = (E)-caffeoyl-AMP + diphosphate. The catalysed reaction is (E)-caffeoyl-AMP + CoA = (E)-caffeoyl-CoA + AMP + H(+). The protein operates within phytoalexin biosynthesis; 3,4',5-trihydroxystilbene biosynthesis; 3,4',5-trihydroxystilbene from trans-4-coumarate: step 1/2. Involved in the phenylpropanoid metabolism by mediating the activation of a number of hydroxycinnamates for the biosynthesis of monolignols and other phenolic secondary metabolites. Catalyzes the formation of CoA esters of cinnamate, 4-coumarate, caffeate and ferulate. Is also able to convert sinapate to its corresponding CoA ester, a reaction that is rarely observed in 4CL catalysis. Is more efficient with substrates in the following order: ferulate &gt; 4-coumarate &gt; sinapate &gt; caffeate &gt; cinnamate. Follows a two-step reaction mechanism, wherein the carboxylate substrate first undergoes adenylation by ATP, followed by a thioesterification in the presence of CoA to yield the final CoA thioesters. The polypeptide is 4-coumarate--CoA ligase 5 (Oryza sativa subsp. japonica (Rice)).